We begin with the raw amino-acid sequence, 284 residues long: Capsid assembly scaffolding protein (284 aa).

Catalysis depends on residues Asp19, His48, and Ser107. Positions 206–243 (EAVTAVAEHVQEKLSATEQRLAEMETAFSALKQEVTDR) form a coiled coil. The interval 258–284 (LDHTESLTQQRRSKATGGGGDALMTNC) is disordered.

The protein belongs to the P2likevirus scaffolding protein family. Homomultimer. Autocleaves itself into an N-terminal fragment containing the protease activity, that remains in the capsid following maturation.

Functionally, scaffolding protein and protease involved in the icosahedric procapsid assembly. Coassembles with the capsid proteins to form the procapsid, in which the scaffolding protein is found within the external shell of icosahedrally arranged capsid protein subunits. In a subsequent step the scaffolding protein molecules are cleaved by the viral protease activity. The polypeptide is Capsid assembly scaffolding protein (O) (Enterobacteriaceae (Bacteriophage P2)).